Consider the following 375-residue polypeptide: Succinyl-diaminopimelate desuccinylase (375 aa).

A Zn(2+)-binding site is contributed by H66. Residue D68 is part of the active site. D99 provides a ligand contact to Zn(2+). E133 serves as the catalytic Proton acceptor. 3 residues coordinate Zn(2+): E134, E162, and H348.

It belongs to the peptidase M20A family. DapE subfamily. As to quaternary structure, homodimer. Requires Zn(2+) as cofactor. It depends on Co(2+) as a cofactor.

It carries out the reaction N-succinyl-(2S,6S)-2,6-diaminopimelate + H2O = (2S,6S)-2,6-diaminopimelate + succinate. Its pathway is amino-acid biosynthesis; L-lysine biosynthesis via DAP pathway; LL-2,6-diaminopimelate from (S)-tetrahydrodipicolinate (succinylase route): step 3/3. Catalyzes the hydrolysis of N-succinyl-L,L-diaminopimelic acid (SDAP), forming succinate and LL-2,6-diaminopimelate (DAP), an intermediate involved in the bacterial biosynthesis of lysine and meso-diaminopimelic acid, an essential component of bacterial cell walls. The protein is Succinyl-diaminopimelate desuccinylase of Shigella dysenteriae serotype 1 (strain Sd197).